The chain runs to 322 residues: Elongation factor P--(R)-beta-lysine ligase (322 aa).

75-77 is a substrate binding site; it reads SPE. 99–101 serves as a coordination point for ATP; the sequence is RNE. Tyr-117 contacts substrate. 241 to 242 provides a ligand contact to ATP; it reads EL. Glu-248 contributes to the substrate binding site. Gly-297 contributes to the ATP binding site.

This sequence belongs to the class-II aminoacyl-tRNA synthetase family. EpmA subfamily. In terms of assembly, homodimer.

The catalysed reaction is D-beta-lysine + L-lysyl-[protein] + ATP = N(6)-((3R)-3,6-diaminohexanoyl)-L-lysyl-[protein] + AMP + diphosphate + H(+). With EpmB is involved in the beta-lysylation step of the post-translational modification of translation elongation factor P (EF-P). Catalyzes the ATP-dependent activation of (R)-beta-lysine produced by EpmB, forming a lysyl-adenylate, from which the beta-lysyl moiety is then transferred to the epsilon-amino group of a conserved specific lysine residue in EF-P. The chain is Elongation factor P--(R)-beta-lysine ligase from Avibacterium paragallinarum (Haemophilus gallinarum).